A 600-amino-acid polypeptide reads, in one-letter code: Elongation factor 4 (600 aa).

The region spanning 5 to 187 is the tr-type G domain; the sequence is SNIRNFSIIA…ALVERIPAPT (183 aa). GTP-binding positions include 17–22 and 134–137; these read DHGKST and NKID.

It belongs to the TRAFAC class translation factor GTPase superfamily. Classic translation factor GTPase family. LepA subfamily.

It is found in the cell inner membrane. The catalysed reaction is GTP + H2O = GDP + phosphate + H(+). Functionally, required for accurate and efficient protein synthesis under certain stress conditions. May act as a fidelity factor of the translation reaction, by catalyzing a one-codon backward translocation of tRNAs on improperly translocated ribosomes. Back-translocation proceeds from a post-translocation (POST) complex to a pre-translocation (PRE) complex, thus giving elongation factor G a second chance to translocate the tRNAs correctly. Binds to ribosomes in a GTP-dependent manner. In Psychrobacter sp. (strain PRwf-1), this protein is Elongation factor 4.